The sequence spans 224 residues: ATP-dependent dethiobiotin synthetase BioD (224 aa).

Position 18 (Thr-18) interacts with Mg(2+). Residue Lys-39 is part of the active site. Ser-43 contributes to the substrate binding site. Asp-56 and Glu-117 together coordinate Mg(2+). Residues Asp-56, 117–120, and 177–178 each bind ATP; these read EGVG and NE.

Belongs to the dethiobiotin synthetase family. As to quaternary structure, homodimer. The cofactor is Mg(2+).

It localises to the cytoplasm. It carries out the reaction (7R,8S)-7,8-diammoniononanoate + CO2 + ATP = (4R,5S)-dethiobiotin + ADP + phosphate + 3 H(+). It functions in the pathway cofactor biosynthesis; biotin biosynthesis; biotin from 7,8-diaminononanoate: step 1/2. Catalyzes a mechanistically unusual reaction, the ATP-dependent insertion of CO2 between the N7 and N8 nitrogen atoms of 7,8-diaminopelargonic acid (DAPA, also called 7,8-diammoniononanoate) to form a ureido ring. This is ATP-dependent dethiobiotin synthetase BioD from Xanthomonas oryzae pv. oryzae (strain MAFF 311018).